Here is a 248-residue protein sequence, read N- to C-terminus: 4-hydroxy-tetrahydrodipicolinate reductase (248 aa).

NAD(+) contacts are provided by residues 9–14, 77–79, and 104–107; these read GAKGRV, GTT, and APNF. Catalysis depends on histidine 134, which acts as the Proton donor/acceptor. Histidine 135 lines the (S)-2,3,4,5-tetrahydrodipicolinate pocket. The active-site Proton donor is lysine 138. 144–145 lines the (S)-2,3,4,5-tetrahydrodipicolinate pocket; it reads GT.

Belongs to the DapB family.

Its subcellular location is the cytoplasm. The enzyme catalyses (S)-2,3,4,5-tetrahydrodipicolinate + NAD(+) + H2O = (2S,4S)-4-hydroxy-2,3,4,5-tetrahydrodipicolinate + NADH + H(+). It catalyses the reaction (S)-2,3,4,5-tetrahydrodipicolinate + NADP(+) + H2O = (2S,4S)-4-hydroxy-2,3,4,5-tetrahydrodipicolinate + NADPH + H(+). It functions in the pathway amino-acid biosynthesis; L-lysine biosynthesis via DAP pathway; (S)-tetrahydrodipicolinate from L-aspartate: step 4/4. Functionally, catalyzes the conversion of 4-hydroxy-tetrahydrodipicolinate (HTPA) to tetrahydrodipicolinate. The protein is 4-hydroxy-tetrahydrodipicolinate reductase of Corynebacterium glutamicum (strain ATCC 13032 / DSM 20300 / JCM 1318 / BCRC 11384 / CCUG 27702 / LMG 3730 / NBRC 12168 / NCIMB 10025 / NRRL B-2784 / 534).